The following is a 97-amino-acid chain: Cell division protein FtsL (97 aa).

Topologically, residues 1–11 (MSRLFVKRLPT) are cytoplasmic. The chain crosses the membrane as a helical span at residues 12-32 (GSFLMLLLYIGLLLSAIAVAY). Over 33-97 (STYWNRQLLN…DPAEVRMVAP (65 aa)) the chain is Periplasmic.

Belongs to the FtsL family. As to quaternary structure, part of a complex composed of FtsB, FtsL and FtsQ.

The protein resides in the cell inner membrane. Essential cell division protein. May link together the upstream cell division proteins, which are predominantly cytoplasmic, with the downstream cell division proteins, which are predominantly periplasmic. The polypeptide is Cell division protein FtsL (Pseudomonas aeruginosa (strain ATCC 15692 / DSM 22644 / CIP 104116 / JCM 14847 / LMG 12228 / 1C / PRS 101 / PAO1)).